The chain runs to 330 residues: HTH-type transcriptional regulator GanR (330 aa).

The region spanning 2–57 (ATIKDIAQEAGFSISTVSRVLNNDESLSVPDETREKIYEAAEKLNYRKKTVRPLVK) is the HTH lacI-type domain. The H-T-H motif DNA-binding region spans 4 to 23 (IKDIAQEAGFSISTVSRVLN).

Negatively regulates the expression of the ganSPQAB operon. Inhibits transcription of the operon by binding to an operator in the promoter region. In the presence of galactobiose, GanR dissociates from the promoter, resulting in the expression of the gan operon. The sequence is that of HTH-type transcriptional regulator GanR from Bacillus subtilis (strain 168).